A 424-amino-acid chain; its full sequence is Arogenate dehydratase 1 (424 aa).

A chloroplast-targeting transit peptide spans 1–52; that stretch reads MQSLTPSSGVNLKSIIRKTSLPPGQTRFITGRVIKCGYQVDSANTVNTAGAP. One can recognise a Prephenate dehydratase domain in the interval 131–308; it reads RVAYQGVPGA…NVTRFVMLAR (178 aa). An ACT domain is found at 321–412; sequence TSIVFAHEGT…SFLRVLGSYP (92 aa).

As to expression, mostly expressed in flowers, especially in petals (corollas and tubes), and, at low levels, in roots, stems, leaves, pistils, stamens, ovaries and sepals.

It is found in the plastid. Its subcellular location is the chloroplast stroma. The enzyme catalyses L-arogenate + H(+) = L-phenylalanine + CO2 + H2O. Its pathway is amino-acid biosynthesis; L-phenylalanine biosynthesis; L-phenylalanine from L-arogenate: step 1/1. Functionally, converts L-arogenate produced from the shikimate-chorismate pathway into phenylalanine (Phe). Involved in floral volatile benzenoids and phenylpropanoids (FVBP) production. This is Arogenate dehydratase 1 from Petunia hybrida (Petunia).